We begin with the raw amino-acid sequence, 747 residues long: 3',5'-cyclic-AMP phosphodiesterase 4D (747 aa).

A disordered region spans residues 1–28; sequence MERDTCDVLSRSKSASEETLHSCNEEED. A compositionally biased stretch (basic and acidic residues) spans 14 to 24; that stretch reads SASEETLHSCN. Ser238, Ser240, Ser287, and Ser314 each carry phosphoserine. A disordered region spans residues 282–302; sequence EVEIPSPTQKEKEKKKRPMSQ. In terms of domain architecture, PDEase spans 325 to 654; that stretch reads VKTEQEDVLA…EWYQSTIPQS (330 aa). Lys326 is covalently cross-linked (Glycyl lysine isopeptide (Lys-Gly) (interchain with G-Cter in SUMO)). His401 functions as the Proton donor in the catalytic mechanism. His401 is a binding site for 3',5'-cyclic AMP. His401 serves as a coordination point for AMP. 4 residues coordinate Zn(2+): His405, His441, Asp442, and Asp559. Residues Asp442, Asp559, Asn562, Gln610, and Phe613 each coordinate AMP. Residue Asp442 participates in Mg(2+) binding. Asp442 is a binding site for Mn(2+). Residues Gln610 and Phe613 each contribute to the 3',5'-cyclic AMP site. Residues 649–747 are disordered; sequence STIPQSPSPA…CVPDDCCPDT (99 aa). A compositionally biased stretch (polar residues) spans 701–712; the sequence is CSDSKTLCTQDS. Over residues 718–734 the composition is skewed to acidic residues; it reads PLDEQVEEEAVAEEESQ.

Belongs to the cyclic nucleotide phosphodiesterase family. PDE4 subfamily. In terms of assembly, homodimer for the long isoforms. Isoforms with truncated N-termini are monomeric. Binds ARRB2. Interacts with PDE4DIP. Identified in a complex composed of RYR1, PDE4D, PKA, FKBP1A and protein phosphatase 1 (PP1). Interacts (via N-terminal region) with SHANK2 (via proline-rich region); the interaction is increased in a PKA-dependent manner. Zn(2+) is required as a cofactor. Mg(2+) serves as cofactor. It depends on Mn(2+) as a cofactor. Sumoylation of long isoforms by PIAS4 augments their activation by PKA phosphorylation and represses their inhibition by ERK phosphorylation. As to expression, expressed in brain (at protein level). Isoform 7 is detected in heart, brain, lung, kidney and testis.

It is found in the cytoplasm. It localises to the membrane. The protein localises to the cytoskeleton. Its subcellular location is the microtubule organizing center. The protein resides in the centrosome. It is found in the apical cell membrane. The catalysed reaction is 3',5'-cyclic AMP + H2O = AMP + H(+). It functions in the pathway purine metabolism; 3',5'-cyclic AMP degradation; AMP from 3',5'-cyclic AMP: step 1/1. With respect to regulation, inhibited by rolipram. Activated by phosphatidic acid. Its function is as follows. Hydrolyzes the second messenger cAMP, which is a key regulator of many important physiological processes. The polypeptide is 3',5'-cyclic-AMP phosphodiesterase 4D (Pde4d) (Mus musculus (Mouse)).